The following is a 442-amino-acid chain: Metacaspase-5 (442 aa).

An N-terminal signal peptide occupies residues 1 to 18 (MDLLLGVLSSGILQNALP). The important for catalytic activity stretch occupies residues 19–62 (FVAGVGRVKRPKRVKLEEAFREAHLCRPVIPYRAPTPYTGGRVK). N69 and N112 each carry an N-linked (GlcNAc...) asparagine glycan. The active site involves H146. Residues D161, D177, and D178 each contribute to the Ca(2+) site. Residue C201 is part of the active site. D208 contacts Ca(2+). N-linked (GlcNAc...) asparagine glycosylation is found at N234, N257, N282, and N331. Residues 336–442 (HYVPQQYLQP…QYLSGVGKPL (107 aa)) are negatively regulates catalytic activity. Residues 348–371 (PPQPYYPPPQPQQPYYPPPQPQQP) are compositionally biased toward pro residues. The segment at 348–442 (PPQPYYPPPQ…QYLSGVGKPL (95 aa)) is disordered. Low complexity predominate over residues 372-382 (YYPSSQLPTQY). Positions 422-434 (PSDQSTYYSSAQY) are enriched in polar residues.

The protein belongs to the peptidase C14B family. Post-translationally, in epimastigotes, the unprocessed enzyme appears to be the main form. Auto-processing is dispensable for catalytic activity towards small oligopeptide substrates.

The protein resides in the recycling endosome. With respect to regulation, activated by Ca(2+). Cysteine protease that cleaves specifically after arginine or lysine residues. May play a role in apoptosis. In Trypanosoma cruzi (strain CL Brener), this protein is Metacaspase-5.